The following is a 647-amino-acid chain: Pollen receptor-like kinase 2 (647 aa).

The first 21 residues, 1–21 (MESKCLMFVSIVSVFFMVVNG), serve as a signal peptide directing secretion. LRR repeat units lie at residues 87-109 (LNSL…EFKK), 110-134 (LVAL…AFDG), 136-159 (GWLK…LVKS), 161-183 (KLIE…RHHP), and 185-203 (MLNL…SFST). The chain crosses the membrane as a helical span at residues 248–268 (IVAAAVAALAASLIIIGVVIF). A Protein kinase domain is found at 338 to 613 (KASAEILGSG…EAVEKMEDLM (276 aa)). Ser340 is modified (phosphoserine). Residues 344–352 (LGSGCFGAS) and Lys366 contribute to the ATP site. Ser418 carries the phosphoserine modification. The residue at position 438 (Thr438) is a Phosphothreonine. Phosphotyrosine is present on Tyr508. The disordered stretch occupies residues 620–647 (DDDFYSTYASEADGRSSRGLSSEGINLS). The span at 637–647 (RGLSSEGINLS) shows a compositional bias: polar residues.

Belongs to the protein kinase superfamily. Ser/Thr protein kinase family. Part of a complex containing ROPGEF1 and ARAC11/ROP1. The interaction between PRK2, ROPGEF1 and ARAC11/ROP1 is phosphorylation-independent. Interacts with ROPGEF12 (via C-terminus). Interacts with ROPGEF1 (via PRONE domain). As to expression, expressed in pollen and/or in flowers, but not in leaves. Expressed in pollen tube.

The protein resides in the cell membrane. It catalyses the reaction L-seryl-[protein] + ATP = O-phospho-L-seryl-[protein] + ADP + H(+). The enzyme catalyses L-threonyl-[protein] + ATP = O-phospho-L-threonyl-[protein] + ADP + H(+). Its activity is regulated as follows. The phosphorylation activity is calcium-independent. In terms of biological role, receptor-like kinase involved in the control of pollen germination and pollen tube polar growth. Phosphorylates ROPGEF1 in its C-terminal region, releasing its auto-inhibition, and thereby activating the ROP1 signaling pathway. May act as a scaffolding protein, recruiting ROPGEF12 to the plasma membrane by binding to its C-terminal domain. Phosphorylates ROPGEF12, releasing its auto-inhibition. This chain is Pollen receptor-like kinase 2, found in Arabidopsis thaliana (Mouse-ear cress).